The primary structure comprises 1241 residues: ATP-dependent helicase/nuclease subunit A (1241 aa).

The region spanning 12 to 485 (SQWTDDQWKA…IDLAKNFRSR (474 aa)) is the UvrD-like helicase ATP-binding domain. ATP is bound at residue 33 to 40 (AAAGSGKT). One can recognise a UvrD-like helicase C-terminal domain in the interval 505 to 805 (GEIDYDADAE…RIMTIHKSKG (301 aa)).

This sequence belongs to the helicase family. AddA subfamily. Heterodimer of AddA and AddB/RexB. Mg(2+) serves as cofactor.

The catalysed reaction is Couples ATP hydrolysis with the unwinding of duplex DNA by translocating in the 3'-5' direction.. The enzyme catalyses ATP + H2O = ADP + phosphate + H(+). Its function is as follows. The heterodimer acts as both an ATP-dependent DNA helicase and an ATP-dependent, dual-direction single-stranded exonuclease. Recognizes the chi site generating a DNA molecule suitable for the initiation of homologous recombination. The AddA nuclease domain is required for chi fragment generation; this subunit has the helicase and 3' -&gt; 5' nuclease activities. The chain is ATP-dependent helicase/nuclease subunit A from Bacillus cereus (strain ZK / E33L).